A 249-amino-acid polypeptide reads, in one-letter code: Isoprenyl transferase (249 aa).

The active site involves Asp-25. Residue Asp-25 participates in Mg(2+) binding. Substrate is bound by residues 26 to 29, Trp-30, Arg-38, His-42, and 70 to 72; these read GNGR and STE. Asn-73 serves as the catalytic Proton acceptor. Substrate-binding positions include Trp-74, Arg-76, Arg-197, and 203 to 205; that span reads RLS. A Mg(2+)-binding site is contributed by Glu-216.

This sequence belongs to the UPP synthase family. Homodimer. Requires Mg(2+) as cofactor.

Its function is as follows. Catalyzes the condensation of isopentenyl diphosphate (IPP) with allylic pyrophosphates generating different type of terpenoids. The sequence is that of Isoprenyl transferase from Streptococcus pyogenes serotype M3 (strain ATCC BAA-595 / MGAS315).